Reading from the N-terminus, the 158-residue chain is Cyclic pyranopterin monophosphate synthase (158 aa).

Residues 75–77 (LCH) and 113–114 (ME) contribute to the substrate site. Residue D128 is part of the active site.

The protein belongs to the MoaC family. As to quaternary structure, homohexamer; trimer of dimers.

The catalysed reaction is (8S)-3',8-cyclo-7,8-dihydroguanosine 5'-triphosphate = cyclic pyranopterin phosphate + diphosphate. It participates in cofactor biosynthesis; molybdopterin biosynthesis. Catalyzes the conversion of (8S)-3',8-cyclo-7,8-dihydroguanosine 5'-triphosphate to cyclic pyranopterin monophosphate (cPMP). The sequence is that of Cyclic pyranopterin monophosphate synthase from Ralstonia nicotianae (strain ATCC BAA-1114 / GMI1000) (Ralstonia solanacearum).